The following is a 333-amino-acid chain: Ribosome biogenesis regulatory protein homolog (333 aa).

Disordered stretches follow at residues 227–248 (KANVKTGKKRKFEANEAPVSGE) and 271–333 (AAAV…ARKG). The span at 278–295 (LREKKEKSERKGAKDQTR) shows a compositional bias: basic and acidic residues. The span at 324 to 333 (GANKAKARKG) shows a compositional bias: basic residues.

The protein belongs to the RRS1 family.

The protein resides in the nucleus. Its subcellular location is the nucleolus. In terms of biological role, involved in ribosomal large subunit assembly. The chain is Ribosome biogenesis regulatory protein homolog from Caenorhabditis elegans.